The primary structure comprises 1402 residues: DNA-directed RNA polymerase subunit beta' (1402 aa).

Zn(2+)-binding residues include C70, C72, C85, and C88. Residues D460, D462, and D464 each contribute to the Mg(2+) site. Positions 812, 886, 893, and 896 each coordinate Zn(2+). The tract at residues 1373 to 1402 is disordered; that stretch reads DRFLNGSASSNEKSRSAGVLEATDEESAGD.

Belongs to the RNA polymerase beta' chain family. As to quaternary structure, the RNAP catalytic core consists of 2 alpha, 1 beta, 1 beta' and 1 omega subunit. When a sigma factor is associated with the core the holoenzyme is formed, which can initiate transcription. Mg(2+) is required as a cofactor. It depends on Zn(2+) as a cofactor.

The enzyme catalyses RNA(n) + a ribonucleoside 5'-triphosphate = RNA(n+1) + diphosphate. Functionally, DNA-dependent RNA polymerase catalyzes the transcription of DNA into RNA using the four ribonucleoside triphosphates as substrates. The chain is DNA-directed RNA polymerase subunit beta' from Dichelobacter nodosus (strain VCS1703A).